Consider the following 315-residue polypeptide: Methionine import ATP-binding protein MetN (315 aa).

Residues 2 to 219 (IEIEKVCVDF…PQHAFTQQLV (218 aa)) enclose the ABC transporter domain. 16–23 (GTSGAGKS) contacts ATP.

It belongs to the ABC transporter superfamily. Methionine importer (TC 3.A.1.24) family. As to quaternary structure, the complex is composed of two ATP-binding proteins (MetN), two transmembrane proteins (MetI) and a solute-binding protein (MetQ).

The protein localises to the cell inner membrane. The enzyme catalyses L-methionine(out) + ATP + H2O = L-methionine(in) + ADP + phosphate + H(+). The catalysed reaction is D-methionine(out) + ATP + H2O = D-methionine(in) + ADP + phosphate + H(+). In terms of biological role, part of the ABC transporter complex MetNIQ involved in methionine import. Responsible for energy coupling to the transport system. This is Methionine import ATP-binding protein MetN from Salmonella enteritidis.